The sequence spans 356 residues: Histidinol-phosphate aminotransferase (356 aa).

K214 carries the post-translational modification N6-(pyridoxal phosphate)lysine.

Belongs to the class-II pyridoxal-phosphate-dependent aminotransferase family. Histidinol-phosphate aminotransferase subfamily. Homodimer. The cofactor is pyridoxal 5'-phosphate.

It carries out the reaction L-histidinol phosphate + 2-oxoglutarate = 3-(imidazol-4-yl)-2-oxopropyl phosphate + L-glutamate. The protein operates within amino-acid biosynthesis; L-histidine biosynthesis; L-histidine from 5-phospho-alpha-D-ribose 1-diphosphate: step 7/9. The sequence is that of Histidinol-phosphate aminotransferase from Escherichia coli O17:K52:H18 (strain UMN026 / ExPEC).